A 141-amino-acid polypeptide reads, in one-letter code: Large ribosomal subunit protein uL11 (141 aa).

Belongs to the universal ribosomal protein uL11 family. Part of the ribosomal stalk of the 50S ribosomal subunit. Interacts with L10 and the large rRNA to form the base of the stalk. L10 forms an elongated spine to which L12 dimers bind in a sequential fashion forming a multimeric L10(L12)X complex. In terms of processing, one or more lysine residues are methylated.

Forms part of the ribosomal stalk which helps the ribosome interact with GTP-bound translation factors. The chain is Large ribosomal subunit protein uL11 from Cyanothece sp. (strain PCC 7425 / ATCC 29141).